A 360-amino-acid chain; its full sequence is 3-isopropylmalate dehydrogenase (360 aa).

76 to 89 (GPKWDTIERDIRPE) contacts NAD(+). Residues R96, R106, R134, and D224 each contribute to the substrate site. Mg(2+) contacts are provided by D224, D248, and D252. 282-294 (GSAPDIAGKGIAN) lines the NAD(+) pocket.

Belongs to the isocitrate and isopropylmalate dehydrogenases family. LeuB type 1 subfamily. Homodimer. Mg(2+) is required as a cofactor. The cofactor is Mn(2+).

It is found in the cytoplasm. It catalyses the reaction (2R,3S)-3-isopropylmalate + NAD(+) = 4-methyl-2-oxopentanoate + CO2 + NADH. It participates in amino-acid biosynthesis; L-leucine biosynthesis; L-leucine from 3-methyl-2-oxobutanoate: step 3/4. In terms of biological role, catalyzes the oxidation of 3-carboxy-2-hydroxy-4-methylpentanoate (3-isopropylmalate) to 3-carboxy-4-methyl-2-oxopentanoate. The product decarboxylates to 4-methyl-2 oxopentanoate. This chain is 3-isopropylmalate dehydrogenase, found in Pseudomonas syringae pv. syringae (strain B728a).